Consider the following 96-residue polypeptide: UPF0251 protein Spea_3639 (96 aa).

The protein belongs to the UPF0251 family.

The chain is UPF0251 protein Spea_3639 from Shewanella pealeana (strain ATCC 700345 / ANG-SQ1).